The chain runs to 481 residues: 2-succinylbenzoate--CoA ligase (481 aa).

It belongs to the ATP-dependent AMP-binding enzyme family. MenE subfamily.

The catalysed reaction is 2-succinylbenzoate + ATP + CoA = 2-succinylbenzoyl-CoA + AMP + diphosphate. It functions in the pathway quinol/quinone metabolism; 1,4-dihydroxy-2-naphthoate biosynthesis; 1,4-dihydroxy-2-naphthoate from chorismate: step 5/7. It participates in quinol/quinone metabolism; menaquinone biosynthesis. Functionally, converts 2-succinylbenzoate (OSB) to 2-succinylbenzoyl-CoA (OSB-CoA). This is 2-succinylbenzoate--CoA ligase from Bacillus cytotoxicus (strain DSM 22905 / CIP 110041 / 391-98 / NVH 391-98).